We begin with the raw amino-acid sequence, 133 residues long: Large ribosomal subunit protein bL17 (133 aa).

The protein belongs to the bacterial ribosomal protein bL17 family. Part of the 50S ribosomal subunit. Contacts protein L32.

The protein is Large ribosomal subunit protein bL17 of Ehrlichia chaffeensis (strain ATCC CRL-10679 / Arkansas).